The primary structure comprises 1030 residues: Probable serine/threonine-protein kinase SIS8 (1030 aa).

2 stretches are compositionally biased toward polar residues: residues 44–58 (PNQS…STTK) and 399–419 (YSAS…NGIE). 4 disordered regions span residues 44–84 (PNQS…PEIK), 399–474 (YSAS…KAPF), 555–625 (TVES…ASST), and 689–736 (LGSN…SDCD). Basic and acidic residues-rich tracts occupy residues 426–435 (TEFRTGEHRS), 458–471 (ISRE…KVEK), and 560–580 (NSTE…EGRH). Residues 613 to 625 (SQSDSSHSEASST) are compositionally biased toward low complexity. The Protein kinase domain occupies 748–1003 (ITVGERIGLG…AEIMASLKRL (256 aa)). ATP contacts are provided by residues 754–762 (IGLGSYGEV) and K775. D871 acts as the Proton acceptor in catalysis. Polar residues predominate over residues 1007 to 1023 (VTGSNIPRPVPSSSSLP). The tract at residues 1007–1030 (VTGSNIPRPVPSSSSLPTEHEQKD) is disordered.

The protein belongs to the protein kinase superfamily. Ser/Thr protein kinase family. As to quaternary structure, interacts with UGT72E1. Expressed roots, rosette and cauline leaves, and at lower levels in flowers and siliques.

Its subcellular location is the nucleus. It carries out the reaction L-seryl-[protein] + ATP = O-phospho-L-seryl-[protein] + ADP + H(+). It catalyses the reaction L-threonyl-[protein] + ATP = O-phospho-L-threonyl-[protein] + ADP + H(+). Functionally, acts as a negative regulator of salt tolerance. Mediates sugar response during early seedling development. The sequence is that of Probable serine/threonine-protein kinase SIS8 from Arabidopsis thaliana (Mouse-ear cress).